A 409-amino-acid polypeptide reads, in one-letter code: Tryptophan synthase beta chain (409 aa).

N6-(pyridoxal phosphate)lysine is present on lysine 86.

This sequence belongs to the TrpB family. As to quaternary structure, tetramer of two alpha and two beta chains. Pyridoxal 5'-phosphate is required as a cofactor.

The catalysed reaction is (1S,2R)-1-C-(indol-3-yl)glycerol 3-phosphate + L-serine = D-glyceraldehyde 3-phosphate + L-tryptophan + H2O. Its pathway is amino-acid biosynthesis; L-tryptophan biosynthesis; L-tryptophan from chorismate: step 5/5. Functionally, the beta subunit is responsible for the synthesis of L-tryptophan from indole and L-serine. The protein is Tryptophan synthase beta chain of Shewanella pealeana (strain ATCC 700345 / ANG-SQ1).